The following is a 410-amino-acid chain: Angiopoietin-related protein 4 (410 aa).

The signal sequence occupies residues 1-23 (MRCAPTAGAALVLCAATAGLLSA). The interval 79–101 (ACQGPKGKDAPFKDSEDRVPEGQ) is disordered. Basic and acidic residues predominate over residues 84 to 98 (KGKDAPFKDSEDRVP). Positions 104 to 152 (ETLQSLQTQLKAQNSKIQQLFQKVAQQQRYLSKQNLRIQNLQSQIDLLA) form a coiled coil. N-linked (GlcNAc...) asparagine glycosylation is present at Asn-181. The Fibrinogen C-terminal domain maps to 183–405 (THLHRPPRDC…ATTLLIQPME (223 aa)). Cys-192 and Cys-220 are oxidised to a cystine. Asn-236 and Asn-242 each carry an N-linked (GlcNAc...) asparagine glycan. A disulfide bridge connects residues Cys-345 and Cys-358.

In terms of assembly, homooligomer; disulfide-linked via Cys residues in the N-terminal part of the protein. The homooligomer undergoes proteolytic processing to release the ANGPTL4 C-terminal chain, which circulates as a monomer. The homooligomer unprocessed form is able to interact with the extracellular matrix. N-glycosylated. Post-translationally, forms disulfide-linked dimers and tetramers. In terms of processing, cleaved into a smaller N-terminal chain and a larger chain that contains the fibrinogen C-terminal domain; both cleaved and uncleaved forms are detected in the extracellular space. The cleaved form is not present within the cell. As to expression, detected in liver and kidney. Predominantly expressed in adipose tissue and is strongly up-regulated by fasting in white adipose tissue and liver. More abundant in areas of lower flow stress in the inner curvature compared to the outer curvature regions of the aorta (at protein level).

The protein localises to the secreted. Its subcellular location is the extracellular space. It is found in the extracellular matrix. Functionally, mediates inactivation of the lipoprotein lipase LPL, and thereby plays a role in the regulation of triglyceride clearance from the blood serum and in lipid metabolism. May also play a role in regulating glucose homeostasis and insulin sensitivity. Inhibits proliferation, migration, and tubule formation of endothelial cells and reduces vascular leakage. Upon heterologous expression, inhibits the adhesion of endothelial cell to the extracellular matrix (ECM), and inhibits the reorganization of the actin cytoskeleton, formation of actin stress fibers and focal adhesions in endothelial cells that have adhered to ANGPTL4-containing ECM (in vitro). Depending on context, may modulate tumor-related angiogenesis. Mediates inactivation of the lipoprotein lipase LPL, and thereby plays an important role in the regulation of triglyceride clearance from the blood serum and in lipid metabolism. Has higher activity in LPL inactivation than the uncleaved protein. The chain is Angiopoietin-related protein 4 (Angptl4) from Mus musculus (Mouse).